Consider the following 525-residue polypeptide: Glucose-6-phosphate isomerase (525 aa).

The Proton donor role is filled by E347. Catalysis depends on residues H378 and K493.

The protein belongs to the GPI family.

It localises to the cytoplasm. It catalyses the reaction alpha-D-glucose 6-phosphate = beta-D-fructose 6-phosphate. The protein operates within carbohydrate biosynthesis; gluconeogenesis. Its pathway is carbohydrate degradation; glycolysis; D-glyceraldehyde 3-phosphate and glycerone phosphate from D-glucose: step 2/4. In terms of biological role, catalyzes the reversible isomerization of glucose-6-phosphate to fructose-6-phosphate. The sequence is that of Glucose-6-phosphate isomerase from Chlamydia trachomatis serovar D (strain ATCC VR-885 / DSM 19411 / UW-3/Cx).